We begin with the raw amino-acid sequence, 126 residues long: Transcription antitermination protein NusB (126 aa).

The protein belongs to the NusB family.

Its function is as follows. Involved in transcription antitermination. Required for transcription of ribosomal RNA (rRNA) genes. Binds specifically to the boxA antiterminator sequence of the ribosomal RNA (rrn) operons. This Oceanobacillus iheyensis (strain DSM 14371 / CIP 107618 / JCM 11309 / KCTC 3954 / HTE831) protein is Transcription antitermination protein NusB.